The primary structure comprises 462 residues: Argininosuccinate lyase (462 aa).

It belongs to the lyase 1 family. Argininosuccinate lyase subfamily.

The protein localises to the cytoplasm. The catalysed reaction is 2-(N(omega)-L-arginino)succinate = fumarate + L-arginine. The protein operates within amino-acid biosynthesis; L-arginine biosynthesis; L-arginine from L-ornithine and carbamoyl phosphate: step 3/3. This chain is Argininosuccinate lyase, found in Bacillus cereus (strain B4264).